A 942-amino-acid polypeptide reads, in one-letter code: Lon protease homolog 4, chloroplastic/mitochondrial (942 aa).

S54 is subject to Phosphoserine. The Lon N-terminal domain maps to 79-301 (VIALPLPHKP…LTLELVKKEV (223 aa)). ATP is bound at residue 456–463 (GPTGVGKT). The segment at 673-725 (ISDDVTTDTEETKSLAKTDLESPETSAEGSTVLTDELATGDPTESTTEQSGEV) is disordered. Over residues 682-692 (EETKSLAKTDL) the composition is skewed to basic and acidic residues. A compositionally biased stretch (polar residues) spans 695–705 (PETSAEGSTVL). One can recognise a Lon proteolytic domain in the interval 756-940 (QTPVGVVMGL…EQIFELAFGY (185 aa)). Active-site residues include S846 and K889.

The protein belongs to the peptidase S16 family. As to quaternary structure, homohexamer or homoheptamer. Organized in a ring with a central cavity.

It is found in the mitochondrion matrix. The protein localises to the plastid. Its subcellular location is the chloroplast thylakoid membrane. It carries out the reaction Hydrolysis of proteins in presence of ATP.. In terms of biological role, ATP-dependent serine protease that mediates the selective degradation of misfolded, unassembled or oxidatively damaged polypeptides as well as certain short-lived regulatory proteins in the mitochondrial matrix. May also have a chaperone function in the assembly of inner membrane protein complexes. Participates in the regulation of mitochondrial gene expression and in the maintenance of the integrity of the mitochondrial genome. Binds to mitochondrial DNA in a site-specific manner. This chain is Lon protease homolog 4, chloroplastic/mitochondrial (LON4), found in Arabidopsis thaliana (Mouse-ear cress).